Reading from the N-terminus, the 45-residue chain is Large ribosomal subunit protein bL34 (45 aa).

The protein belongs to the bacterial ribosomal protein bL34 family.

This Corynebacterium urealyticum (strain ATCC 43042 / DSM 7109) protein is Large ribosomal subunit protein bL34.